The sequence spans 202 residues: 3-isopropylmalate dehydratase small subunit (202 aa).

The protein belongs to the LeuD family. LeuD type 1 subfamily. In terms of assembly, heterodimer of LeuC and LeuD.

It carries out the reaction (2R,3S)-3-isopropylmalate = (2S)-2-isopropylmalate. Its pathway is amino-acid biosynthesis; L-leucine biosynthesis; L-leucine from 3-methyl-2-oxobutanoate: step 2/4. Its function is as follows. Catalyzes the isomerization between 2-isopropylmalate and 3-isopropylmalate, via the formation of 2-isopropylmaleate. The protein is 3-isopropylmalate dehydratase small subunit of Novosphingobium aromaticivorans (strain ATCC 700278 / DSM 12444 / CCUG 56034 / CIP 105152 / NBRC 16084 / F199).